Here is a 144-residue protein sequence, read N- to C-terminus: Ribosomal RNA large subunit methyltransferase H (144 aa).

S-adenosyl-L-methionine contacts are provided by residues Leu68, Gly96, and Phe112–Phe117.

Belongs to the RNA methyltransferase RlmH family. As to quaternary structure, homodimer.

It is found in the cytoplasm. The enzyme catalyses pseudouridine(1915) in 23S rRNA + S-adenosyl-L-methionine = N(3)-methylpseudouridine(1915) in 23S rRNA + S-adenosyl-L-homocysteine + H(+). In terms of biological role, specifically methylates the pseudouridine at position 1915 (m3Psi1915) in 23S rRNA. The sequence is that of Ribosomal RNA large subunit methyltransferase H from Mycoplasmopsis synoviae (strain 53) (Mycoplasma synoviae).